A 328-amino-acid polypeptide reads, in one-letter code: Mitochondrial thiamine pyrophosphate carrier 1 (328 aa).

Solcar repeat units lie at residues 12 to 110 (GTRR…TTQL), 120 to 208 (PQPI…LRPV), and 221 to 316 (PPGS…ALKL). The next 6 helical transmembrane spans lie at 17-37 (VVLAGGIAGLISRFCIAPLDV), 79-99 (LTGLWKGNIPAELLYVCYGGI), 126-146 (FISGALGGGIATAATYPLDLL), 185-205 (SAAVGQIVPYMGLFFATYEAL), 227-247 (AAAGIVASVLAKTGVFPLDLV), and 291-308 (GLTVSLVKAAPASAVTMW).

This sequence belongs to the mitochondrial carrier (TC 2.A.29) family.

The protein localises to the mitochondrion inner membrane. In terms of biological role, mitochondrial transporter that mediates uptake of thiamine pyrophosphate (ThPP) into mitochondria. In Emericella nidulans (strain FGSC A4 / ATCC 38163 / CBS 112.46 / NRRL 194 / M139) (Aspergillus nidulans), this protein is Mitochondrial thiamine pyrophosphate carrier 1 (tpc1).